The primary structure comprises 261 residues: Na(+)-translocating NADH-quinone reductase subunit C (261 aa).

Residues 12–32 (LGVVVGLSLVCSIIVSTAAVG) traverse the membrane as a helical segment. T229 carries the FMN phosphoryl threonine modification.

In terms of assembly, composed of six subunits; NqrA, NqrB, NqrC, NqrD, NqrE and NqrF. It depends on FMN as a cofactor.

Its subcellular location is the cell inner membrane. The enzyme catalyses a ubiquinone + n Na(+)(in) + NADH + H(+) = a ubiquinol + n Na(+)(out) + NAD(+). Functionally, NQR complex catalyzes the reduction of ubiquinone-1 to ubiquinol by two successive reactions, coupled with the transport of Na(+) ions from the cytoplasm to the periplasm. NqrA to NqrE are probably involved in the second step, the conversion of ubisemiquinone to ubiquinol. This Vibrio campbellii (strain ATCC BAA-1116) protein is Na(+)-translocating NADH-quinone reductase subunit C.